Reading from the N-terminus, the 816-residue chain is Protein EFR3 homolog B (816 aa).

The segment covering 206–219 (SGEGTESRSPSPLQ) has biased composition (polar residues). The interval 206-230 (SGEGTESRSPSPLQASEKEKESPAE) is disordered. The segment covering 221 to 230 (SEKEKESPAE) has biased composition (basic and acidic residues).

It belongs to the EFR3 family. Component of a phosphatidylinositol 4-kinase (PI4K) complex. Post-translationally, palmitoylated at its N-terminus, anchoring the protein to the plasma membrane.

The protein localises to the cell membrane. In terms of biological role, component of a complex required to localize phosphatidylinositol 4-kinase (PI4K) to the plasma membrane. The complex acts as a regulator of phosphatidylinositol 4-phosphate (PtdIns(4)P) synthesis. In the complex, efr3b probably acts as the membrane-anchoring component. In Danio rerio (Zebrafish), this protein is Protein EFR3 homolog B (efr3b).